The primary structure comprises 572 residues: MSRKMFSCDFETTTKLDDCRVWAYGYMEIGNLDNYKIGNSLDEFMQWVMEIQADLYFHNLKFDGAFIVNWLEQHGFKWSNEGLPNTYNTIISKMGQWYMIDICFGYKGKRKLHTVIYDSLKKLPFPVKKIAKDFQLPLLKGDIDYHTERPVGHEITPEEYEYIKNDIEIIARALDIQFKQGLDRMTAGSDSLKGFKDILSTKKFNKVFPKLSLPMDKEIRKAYRGGFTWLNDKYKEKEIGEGMVFDVNSLYPSQMYSRPLPYGAPIVFQGKYEKDEQYPLYIQRIRFEFELKEGYIPTIQIKKNPFFKGNEYLKNSGVEPVELYLTNVDLELIQEHYELYNVEYIDGFKFREKTGLFKDFIDKWTYVKTHEEGAKKQLAKLMLNSLYGKFASNPDVTGKVPYLKDDGSLGFRVGDEEYKDPVYTPMGVFITAWARFTTITAAQACYDRIIYCDTDSIHLTGTEVPEIIKDIVDPKKLGYWAHESTFKRAKYLRQKTYIQDIYVKEVDGKLKECSPDEATTTKFSVKCAGMTDTIKKKVTFDNFAVGFSSMGKPKPVQVNGGVVLVDSVFTIK.

Residues 1 to 222 are 3'-5' exonuclease and strand displacement activities; sequence MSRKMFSCDF…LPMDKEIRKA (222 aa). Residues 56-66 form an interaction with the primer terminal protein region; the sequence is YFHNLKFDGAF. Residues Asp-142 and Asp-166 each contribute to the Mg(2+) site. The segment at 223–226 is DNA-binding; Involved in the formation of a stable complex between TP and phi29 DNA polymerase; that stretch reads YRGG. Residues 227 to 572 form an initiation, polymerization and pyrophosphorolytic activities region; that stretch reads FTWLNDKYKE…VLVDSVFTIK (346 aa). Positions 246 and 247 each coordinate Mg(2+). The 5-methyl-UTP site is built by Tyr-251, Lys-368, and Lys-380. Positions 453 and 455 each coordinate Mg(2+). Asp-455 lines the 5-methyl-UTP pocket.

This sequence belongs to the DNA polymerase type-B family. As to quaternary structure, interacts with the primer terminal protein; this interaction allows the initiation of TP-primed DNA replication at both viral DNA ends. Interacts with DNA. Mg(2+) serves as cofactor.

It catalyses the reaction DNA(n) + a 2'-deoxyribonucleoside 5'-triphosphate = DNA(n+1) + diphosphate. In terms of biological role, polymerase responsible for protein-primed viral DNA replication by strand displacement with high processivity and fidelity. To start replication, the DNA polymerase forms a heterodimer with a free primer terminal protein (TP), recognizes the replication origins at both 5' ends of the linear chromosome, and initiates replication using as primer the OH-group of Ser-232 of the TP. This polymerase possesses three enzymatic activities: DNA synthesis (polymerase), primer terminal protein (TP) deoxynucleotidylation, which is the formation of a covalent linkage (phosphoester) between the hydroxyl group of a specific serine residue in TP and 5'-dAMP, a reaction directed by the second T at the 3' end, and 3' to 5' exonuclease activity. Exonuclease activity has a proofreading purpose. This Bacillus phage M2 (Bacteriophage M2) protein is DNA polymerase (G).